Reading from the N-terminus, the 657-residue chain is UvrABC system protein B (657 aa).

The Helicase ATP-binding domain maps to 24–409 (AGVRNQVKSQ…SGHIVQQIIR (386 aa)). 37–44 (GTTGSGKT) contributes to the ATP binding site. Positions 90 to 113 (YYDYYQPEAYIARSDTYIEKSLLI) match the Beta-hairpin motif. A Helicase C-terminal domain is found at 426 to 589 (QVDDLLEEIR…IVPKPIIKAI (164 aa)). A UVR domain is found at 617–652 (EEQIKKYEALMQRAAKEFRFNEAAKYRDAMQACKEQ).

The protein belongs to the UvrB family. Forms a heterotetramer with UvrA during the search for lesions. Interacts with UvrC in an incision complex.

It localises to the cytoplasm. Functionally, the UvrABC repair system catalyzes the recognition and processing of DNA lesions. A damage recognition complex composed of 2 UvrA and 2 UvrB subunits scans DNA for abnormalities. Upon binding of the UvrA(2)B(2) complex to a putative damaged site, the DNA wraps around one UvrB monomer. DNA wrap is dependent on ATP binding by UvrB and probably causes local melting of the DNA helix, facilitating insertion of UvrB beta-hairpin between the DNA strands. Then UvrB probes one DNA strand for the presence of a lesion. If a lesion is found the UvrA subunits dissociate and the UvrB-DNA preincision complex is formed. This complex is subsequently bound by UvrC and the second UvrB is released. If no lesion is found, the DNA wraps around the other UvrB subunit that will check the other stand for damage. This Chlamydia pneumoniae (Chlamydophila pneumoniae) protein is UvrABC system protein B.